Here is a 445-residue protein sequence, read N- to C-terminus: Phosphoglucosamine mutase (445 aa).

The Phosphoserine intermediate role is filled by Ser102. Mg(2+) is bound by residues Ser102, Asp241, Asp243, and Asp245. Ser102 bears the Phosphoserine mark.

It belongs to the phosphohexose mutase family. It depends on Mg(2+) as a cofactor. Activated by phosphorylation.

The enzyme catalyses alpha-D-glucosamine 1-phosphate = D-glucosamine 6-phosphate. Functionally, catalyzes the conversion of glucosamine-6-phosphate to glucosamine-1-phosphate. The chain is Phosphoglucosamine mutase from Acinetobacter baumannii (strain AB0057).